The primary structure comprises 54 residues: ATP synthase protein 8 (54 aa).

The chain crosses the membrane as a helical span at residues 8–28 (WWIINFFIIWTAILLTLVILV).

This sequence belongs to the ATPase protein 8 family. F-type ATPases have 2 components, CF(1) - the catalytic core - and CF(0) - the membrane proton channel.

It localises to the mitochondrion membrane. Its function is as follows. Mitochondrial membrane ATP synthase (F(1)F(0) ATP synthase or Complex V) produces ATP from ADP in the presence of a proton gradient across the membrane which is generated by electron transport complexes of the respiratory chain. F-type ATPases consist of two structural domains, F(1) - containing the extramembraneous catalytic core and F(0) - containing the membrane proton channel, linked together by a central stalk and a peripheral stalk. During catalysis, ATP synthesis in the catalytic domain of F(1) is coupled via a rotary mechanism of the central stalk subunits to proton translocation. Part of the complex F(0) domain. Minor subunit located with subunit a in the membrane. The sequence is that of ATP synthase protein 8 (MT-ATP8) from Paracentrotus lividus (Common sea urchin).